We begin with the raw amino-acid sequence, 372 residues long: DSC E3 ubiquitin ligase complex subunit 2 (372 aa).

5 consecutive transmembrane segments (helical) span residues 26–46 (VVAG…LHLL), 54–74 (ILLW…LFII), 95–115 (YMFI…SLLF), 126–146 (TFLI…TVFV), and 160–180 (VIPM…NAFL). The disordered stretch occupies residues 246–314 (TENENQVENP…LPTGPASQLY (69 aa)). The span at 249-268 (ENQVENPVSNADANDSPTRQ) shows a compositional bias: polar residues. S264 carries the post-translational modification Phosphoserine. The residue at position 266 (T266) is a Phosphothreonine. The segment covering 269–284 (NARATAIASSSNTAAS) has biased composition (low complexity). A compositionally biased stretch (polar residues) spans 286–305 (RNRQQISHPPLGRTSSSSVL). Residues 332-368 (EDINTVQTIMQTSRAQAIQALSQTNDVQRAVELLLEQ) enclose the UBA domain.

In terms of assembly, component of the DSC E3 ubiquitin ligase complex composed of dsc1, dsc2, dsc3 and dsc4.

The protein localises to the golgi apparatus membrane. It catalyses the reaction S-ubiquitinyl-[E2 ubiquitin-conjugating enzyme]-L-cysteine + [acceptor protein]-L-lysine = [E2 ubiquitin-conjugating enzyme]-L-cysteine + N(6)-ubiquitinyl-[acceptor protein]-L-lysine.. It functions in the pathway protein modification; protein ubiquitination. Its function is as follows. Component of the DSC E3 ubiquitin ligase complex which is required for the sre1 transcriptional activator proteolytic cleavage to release the soluble transcription factor from the membrane in low oxygen or sterol conditions. The complex also plays an important role in the multivesicular body (MVB) pathway and functions in a post-endoplasmic reticulum pathway for protein degradation. In Schizosaccharomyces pombe (strain 972 / ATCC 24843) (Fission yeast), this protein is DSC E3 ubiquitin ligase complex subunit 2 (dsc2).